A 461-amino-acid polypeptide reads, in one-letter code: Glutamate--tRNA ligase (461 aa).

The 'HIGH' region signature appears at 8–18; it reads PSPTGYLHIGG. The 'KMSKS' region motif lies at 240–244; sequence KMSKR. Lysine 243 contributes to the ATP binding site.

This sequence belongs to the class-I aminoacyl-tRNA synthetase family. Glutamate--tRNA ligase type 1 subfamily. Monomer.

The protein resides in the cytoplasm. It carries out the reaction tRNA(Glu) + L-glutamate + ATP = L-glutamyl-tRNA(Glu) + AMP + diphosphate. In terms of biological role, catalyzes the attachment of glutamate to tRNA(Glu) in a two-step reaction: glutamate is first activated by ATP to form Glu-AMP and then transferred to the acceptor end of tRNA(Glu). This is Glutamate--tRNA ligase from Chromobacterium violaceum (strain ATCC 12472 / DSM 30191 / JCM 1249 / CCUG 213 / NBRC 12614 / NCIMB 9131 / NCTC 9757 / MK).